Reading from the N-terminus, the 95-residue chain is MRKYETIFVAHPSLDEEAVKALIEKFKGVIENGNGTVDNVDFWGKRKLAYEIAKVNEGYYTLINFTANPELPKELDRVFGITDGIIRHIIVKEEQ.

It belongs to the bacterial ribosomal protein bS6 family.

In terms of biological role, binds together with bS18 to 16S ribosomal RNA. In Clostridium perfringens (strain ATCC 13124 / DSM 756 / JCM 1290 / NCIMB 6125 / NCTC 8237 / Type A), this protein is Small ribosomal subunit protein bS6.